Consider the following 1466-residue polypeptide: Helicase ARIP4 (1466 aa).

Disordered stretches follow at residues 1-137 (MSDE…ERRK) and 185-235 (DSSS…THVN). Residues 11-49 (PDLDPDVELEDEEEEEEEEEVAVEEHDRDDEEGLLDDTS) show a composition bias toward acidic residues. Over residues 72–82 (TSTTSSQSEPS) the composition is skewed to low complexity. Positions 99-114 (KKRAQKPSHMRRNIRK) are enriched in basic residues. Residues Lys114 and Lys126 each participate in a glycyl lysine isopeptide (Lys-Gly) (interchain with G-Cter in SUMO2) cross-link. Basic and acidic residues predominate over residues 191–200 (EDEKSSRDEV). Residue Lys271 forms a Glycyl lysine isopeptide (Lys-Gly) (interchain with G-Cter in SUMO2) linkage. The Helicase ATP-binding domain occupies 291 to 511 (RFKTSSGFGC…WCMVDFVRPD (221 aa)). 304 to 311 (HSMGLGKT) lines the ATP pocket. A DEAH box motif is present at residues 462 to 465 (DEGH). An LXXLL motif 1 motif is present at residues 550–554 (LHSLL). A disordered region spans residues 649 to 670 (SAGTSARCPPHGTKVKGEDSAL). Residues Lys664, Lys681, Lys758, Lys900, Lys1013, and Lys1017 each participate in a glycyl lysine isopeptide (Lys-Gly) (interchain with G-Cter in SUMO2) cross-link. The Helicase C-terminal domain maps to 727–895 (HLIEESVKLG…RVVDDLNPML (169 aa)). 2 disordered regions span residues 1026-1045 (QSTP…GVSS) and 1120-1170 (ATGK…VSPD). The segment covering 1135 to 1154 (SGSQGPSLASTSNGRHSASS) has biased composition (polar residues). Residues Ser1168 and Ser1171 each carry the phosphoserine modification. Disordered stretches follow at residues 1184-1212 (VAAA…MDNS) and 1259-1281 (TPSV…APVQ). Thr1259 carries the post-translational modification Phosphothreonine. An LXXLL motif 2 motif is present at residues 1328-1332 (LSNLL). The segment at 1444–1466 (AEVGFSSNDDEDKDDDVIEVTGK) is disordered. The segment covering 1451-1466 (NDDEDKDDDVIEVTGK) has biased composition (acidic residues).

Belongs to the SNF2/RAD54 helicase family. Interacts with AR via its N-terminus. Interacts with DYRK1A. Binds DNA and mononucleosomes, but does not seem to form large multiprotein complexes. Post-translationally, sumoylated. In terms of tissue distribution, expressed at relatively low level, with highest expression in testis, liver and kidney. In brain, it is expressed in hippocampal and cerebellar neurons. In testis, it is present at high level in Sertoli cell nuclei. Also present in Leydig cell (at protein level).

It is found in the nucleus. The enzyme catalyses ATP + H2O = ADP + phosphate + H(+). With respect to regulation, enzyme activity is enhanced by dsDNA (double-stranded DNA) and ssDNA (single-stranded DNA). DNA helicase that modulates androgen receptor (AR)-dependent transactivation in a promoter-dependent manner. Not able to remodel mononucleosomes in vitro. Acts as an AR-coregulator in Sertoli cells. This Mus musculus (Mouse) protein is Helicase ARIP4 (Rad54l2).